The following is a 259-amino-acid chain: Tryptophan synthase alpha chain (259 aa).

Catalysis depends on proton acceptor residues glutamate 35 and aspartate 46.

This sequence belongs to the TrpA family. As to quaternary structure, tetramer of two alpha and two beta chains.

It carries out the reaction (1S,2R)-1-C-(indol-3-yl)glycerol 3-phosphate + L-serine = D-glyceraldehyde 3-phosphate + L-tryptophan + H2O. Its pathway is amino-acid biosynthesis; L-tryptophan biosynthesis; L-tryptophan from chorismate: step 5/5. Functionally, the alpha subunit is responsible for the aldol cleavage of indoleglycerol phosphate to indole and glyceraldehyde 3-phosphate. This chain is Tryptophan synthase alpha chain, found in Methanococcus maripaludis (strain C5 / ATCC BAA-1333).